The following is a 228-amino-acid chain: UPF0758 protein CLK_2387 (228 aa).

The 123-residue stretch at 106-228 (KISTPLDVSN…YVSMKEKGTI (123 aa)) folds into the MPN domain. Residues H177, H179, and D190 each coordinate Zn(2+). Residues 177 to 190 (HNHPSGDPTPSKED) carry the JAMM motif motif.

It belongs to the UPF0758 family.

The chain is UPF0758 protein CLK_2387 from Clostridium botulinum (strain Loch Maree / Type A3).